A 243-amino-acid chain; its full sequence is MASTLKFIVIVPAAGVGKRMQANCPKQYLRINNETILSHTVMRLLSHPLISQVIVALGTEDQYFAESELAHHKDIIRVNGGTERVNSVLNGLKAVDSDKYPWVLVHDAARPCVSHQDIDKLITRCLRKDYGGILATPVRDTMKRGVLIKDSAKGDNTIIESTVEREQLWHALTPQMYKTDELTLAIEQALENSLKITDEASAIEQANLPSLLVSASSENIKITHPNDLALAEFYLNKQANNTN.

The protein belongs to the IspD/TarI cytidylyltransferase family. IspD subfamily.

It carries out the reaction 2-C-methyl-D-erythritol 4-phosphate + CTP + H(+) = 4-CDP-2-C-methyl-D-erythritol + diphosphate. The protein operates within isoprenoid biosynthesis; isopentenyl diphosphate biosynthesis via DXP pathway; isopentenyl diphosphate from 1-deoxy-D-xylulose 5-phosphate: step 2/6. Its function is as follows. Catalyzes the formation of 4-diphosphocytidyl-2-C-methyl-D-erythritol from CTP and 2-C-methyl-D-erythritol 4-phosphate (MEP). This chain is 2-C-methyl-D-erythritol 4-phosphate cytidylyltransferase, found in Colwellia psychrerythraea (strain 34H / ATCC BAA-681) (Vibrio psychroerythus).